The following is a 496-amino-acid chain: UDP-glycosyltransferase 84A2 (496 aa).

Residue histidine 23 is the Proton acceptor of the active site. Histidine 23 is a binding site for an anthocyanidin. The UDP-alpha-D-glucose site is built by glutamine 352, histidine 367, tryptophan 370, asparagine 371, serine 372, and glutamate 375. Glycine 390 is a binding site for an anthocyanidin. UDP-alpha-D-glucose contacts are provided by aspartate 391 and glutamine 392.

The protein belongs to the UDP-glycosyltransferase family. As to expression, expressed in roots, cotyledons, leaf veins and trichomes.

It carries out the reaction (E)-sinapate + UDP-alpha-D-glucose = 1-O-(trans-sinapoyl)-beta-D-glucose + UDP. In terms of biological role, sinapate glucosyltransferase (SGT) required for the biosynthesis of the glucose ester sinapoylglucose and subsequently sinapoylmalate and sinapoylcholine. Is the major SGT activity in plant. Plays an important role in sinapoylation of anthocyanins. Sinapoylglucose produced by UGT84A2 is a significant source of sinapoyl moieties for anthocyanins. Indole-3-butyric acid (IBA)-specific glucosyltransferase that catalyzes the glucosylation of the auxin IBA, but not indole-3-acetic acid (IAA). May be involved in flowering regulation through IBA-mediated transcriptional repression of the auxin-response factors ARF6 and ARF8 and downstream flowering pathway genes. Can glucosylate the phytotoxic xenobiotic compound 2,4,5-trichlorophenol (TCP). The polypeptide is UDP-glycosyltransferase 84A2 (Arabidopsis thaliana (Mouse-ear cress)).